The sequence spans 190 residues: ADP-ribosylation factor-like protein 6 (190 aa).

Glycine 2 carries the N-myristoyl glycine lipid modification. GTP-binding positions include 24 to 31 (GLDNSGKT), 69 to 73 (DMAGQ), and 130 to 133 (NKMD).

It belongs to the small GTPase superfamily. Arf family. In terms of tissue distribution, specifically expressed in ciliated cells.

The protein resides in the cytoplasm. The protein is ADP-ribosylation factor-like protein 6 of Caenorhabditis elegans.